A 296-amino-acid chain; its full sequence is N-acetylmuramic acid 6-phosphate etherase (296 aa).

The SIS domain maps to 54 to 217 (VTESFRKGGR…STTSMVGIGK (164 aa)). Catalysis depends on E82, which acts as the Proton donor. E113 is a catalytic residue.

This sequence belongs to the GCKR-like family. MurNAc-6-P etherase subfamily. Homodimer.

It catalyses the reaction N-acetyl-D-muramate 6-phosphate + H2O = N-acetyl-D-glucosamine 6-phosphate + (R)-lactate. It participates in amino-sugar metabolism; N-acetylmuramate degradation. Functionally, specifically catalyzes the cleavage of the D-lactyl ether substituent of MurNAc 6-phosphate, producing GlcNAc 6-phosphate and D-lactate. The chain is N-acetylmuramic acid 6-phosphate etherase from Listeria welshimeri serovar 6b (strain ATCC 35897 / DSM 20650 / CCUG 15529 / CIP 8149 / NCTC 11857 / SLCC 5334 / V8).